Reading from the N-terminus, the 1416-residue chain is MDVDFGAQAGQSYRTVQLSAKEVLAAGRRQHYCNMIDLLASSCKSSGLIATSFTDDELVEFWLGDILPLMFDADRKIQDCAVAALAEALVALDVSVIHSAKCWPQIRSEFVDKYTIIIGEMRDAKNSNWHKIWTLLVQIMDEDLLRGCVYINKFLALVELGFRNPDNGVRSEAFLCWRVLIKIFAAYDELTSAKRLRLLLIPLRTSQSRSSHVSGIKLRVWWYLLSCLDHELPKSFDSAVEHFLAFMLGGGPRNLATGLAHNYQTARELALPCLVALWGVESSEPLQRLMRELRLETLVQPSPLMSVEVFQQHWKPLLAAAVSGLKLLTENDATEAEQLLLQLLVRNLCLAMFRLAVAPFNVACCSEIEKILQAEDNSGGRVVRALFNTIAADNLVMERVSGSDHLDVLEAYLKLVLKSKTEVPAAILQRSIACIFAVDRIEANNQNEFRMLGSFAELLMQANDEEDFEGFAFKLQVWRQVSQALSNYLRNNALEYRVAHNASLLDTWLLWPLQTLAAFAGRRASNSFDASFCDQWRQLVNAGQNAPGRKKFLTDLKATLTDLLKSKDEPLFAELFDAYVTSLIKFGLCKEAPLYKDVFGLLQTIFEQPSSQKTLEACLNTLRNLVVELRQNELMVVFDSLKPTLSSGIQCWNKMKCEGGFLEEWKRGIQEKFRKLPMKTMANQLKELFKADDLFVIIPSVWSLNPEKLTDRQKERFAEKSDIPALYNDMSQSQDSASIKPWTPKKVVIAKSKQGELALTGKDDNGEVIDITASEESEKEPVRVDVVTPIRKKPGRKSQAQKELEAAARAASLAEEPPKRQTRTRAAQKETEQVAQPQPAFEPQLRSPKKLPPSPVVQSTAAAVKQAKVAKPTPVVVIAQSEDLFPEVAAEPEPQPEPVKKPDPVPETTQLTPPDVPLEAVPSTQLPGSSGDPAASAGAVAAGEMSPKKSGTRIYNLSSPPDRKQTNNSSSPTLRPKPTGHLTGRGAQLINMIRNKKLDAASGSPYACMSTSRLVHQVTPARAQDRAEQVSTPTSELNELTGTDHTSTPIQAPPSKDLLVFSKRLPSPSASPSVSILKRKLRCESLDDVTLDSPALKRKRVSFHDPPVSVTKEYLRDAEETRSSLKPKRCLLMDKVAQTTEMRQALRRRGRLDSIIEIERFASEQTARTATTDKSLDKSTGEAPEEDAFTSLKWNDTGNAHNISISEEPVKAMEVESELETAGQDLAIMDPEAALDLAVAQLPLESVLQRYFDKSPLKSAGMLAKFLSAQMTANEKLKTNVLETLSENHSKDFLDHAVRENLSSVVCDRLNPTSVLEYVCAKSKISASCRNGLLAQVPEILKSGPRSDSERLAFVQQLMVQCSPGDDLLLDLIDLLMRTRRERNNSTSTHISKGVVSAVGSPDNVAETAADSSSNL.

Disordered stretches follow at residues proline 789–glutamine 858, proline 886–glycine 984, alanine 1021–proline 1054, and threonine 1166–glutamate 1186. Positions glycine 928–methionine 945 are enriched in low complexity. Residues glutamine 1029–isoleucine 1050 are compositionally biased toward polar residues.

It belongs to the RIF1 family. Highly divergent. As to quaternary structure, interacts with Pp1-87b. Interacts with SuUR (via SNF2-like region). Phosphorylated, probably by Cdk1; phosphorylation regulates dissociation from heterochromatin. As to expression, expressed in nurse cells and follicle cells in the adult female (at protein level). Detected in adult at extremely low levels.

The protein resides in the nucleus. Its subcellular location is the chromosome. The protein localises to the telomere. In terms of biological role, regulates the timing of initiation of DNA replication. Functions in copy number control by promoting the underreplication of DNA, which is found in many late replicating euchromatic regions of salivary gland polytene chromosomes. Promotes underreplication by localizing to active DNA replication forks in a partially SuUR-dependent manner, and inhibiting replication fork progression. Might also work as an adapter to recruit Pp1-87B to multiple sites on the chromosome and may function with Pp1-87B to mediate underreplication. Plays an essential role in embryonic development, in the transition from larvae to pupae and, probably, in proliferating tissues later on. In embryos, during mid-blastula transition, binds to and selectively delays the replication of large blocks of repetitive DNA satellite sequences during S phase in response to the activity of Cdk1; maternal Rif1 is specifically required for the normal extension of S phase 14. Unlike mammalian orthologs, does not appear to play a role in DNA damage repair. The polypeptide is Telomere-associated protein RIF1 (Drosophila melanogaster (Fruit fly)).